The chain runs to 252 residues: MTREKSLALLITLAAALAAAESPPGRCHSPKTVGPCRASFHRWRYNATSQMCQEFIFGGCKGNANNFVSKQDCFQTCIRGGAAEATVVPSGPATEVATPRAGHLPEAYENRPGFREFCAAPRVVGPCRASFLRWYFDLESRMCKMFIYGGCRGNKNNYLFEEHCWSQCTGDGEITEEPGDAGAQPPLPSEPFSFSTRAVVLAVLPAILVTILLGSMGVFFVKICRKNPELSVGTVWSTLDDKEYLMSNAYTL.

The first 20 residues, 1-20 (MTREKSLALLITLAAALAAA), serve as a signal peptide directing secretion. 2 BPTI/Kunitz inhibitor domains span residues 27 to 77 (CHSP…FQTC) and 118 to 168 (CAAP…WSQC). Intrachain disulfides connect Cys27-Cys77, Cys36-Cys60, Cys52-Cys73, Cys118-Cys168, Cys127-Cys151, and Cys143-Cys164. N-linked (GlcNAc...) asparagine glycosylation occurs at Asn46.

This sequence belongs to the venom Kunitz-type family. As to expression, expressed by the venom gland.

Its subcellular location is the secreted. Functionally, serine protease inhibitor. The chain is Putative Kunitz-type serine protease inhibitor from Austrelaps labialis (Pygmy copperhead).